The sequence spans 450 residues: Adenylosuccinate lyase (450 aa).

Residues 9–10 (RY), 75–77 (HHD), and 101–102 (TS) contribute to the N(6)-(1,2-dicarboxyethyl)-AMP site. Histidine 149 functions as the Proton donor/acceptor in the catalytic mechanism. Glutamine 223 provides a ligand contact to N(6)-(1,2-dicarboxyethyl)-AMP. Serine 273 functions as the Proton donor/acceptor in the catalytic mechanism. N(6)-(1,2-dicarboxyethyl)-AMP-binding positions include serine 274, 279-281 (KRN), and 318-322 (SVERV).

The protein belongs to the lyase 1 family. Adenylosuccinate lyase subfamily. As to quaternary structure, homotetramer. Residues from neighboring subunits contribute catalytic and substrate-binding residues to each active site.

The catalysed reaction is N(6)-(1,2-dicarboxyethyl)-AMP = fumarate + AMP. It carries out the reaction (2S)-2-[5-amino-1-(5-phospho-beta-D-ribosyl)imidazole-4-carboxamido]succinate = 5-amino-1-(5-phospho-beta-D-ribosyl)imidazole-4-carboxamide + fumarate. It functions in the pathway purine metabolism; AMP biosynthesis via de novo pathway; AMP from IMP: step 2/2. Its pathway is purine metabolism; IMP biosynthesis via de novo pathway; 5-amino-1-(5-phospho-D-ribosyl)imidazole-4-carboxamide from 5-amino-1-(5-phospho-D-ribosyl)imidazole-4-carboxylate: step 2/2. Functionally, catalyzes two reactions in de novo purine nucleotide biosynthesis. Catalyzes the breakdown of 5-aminoimidazole- (N-succinylocarboxamide) ribotide (SAICAR or 2-[5-amino-1-(5-phospho-beta-D-ribosyl)imidazole-4-carboxamido]succinate) to 5-aminoimidazole-4-carboxamide ribotide (AICAR or 5-amino-1-(5-phospho-beta-D-ribosyl)imidazole-4-carboxamide) and fumarate, and of adenylosuccinate (ADS or N(6)-(1,2-dicarboxyethyl)-AMP) to adenosine monophosphate (AMP) and fumarate. In Pyrococcus horikoshii (strain ATCC 700860 / DSM 12428 / JCM 9974 / NBRC 100139 / OT-3), this protein is Adenylosuccinate lyase (purB).